Consider the following 345-residue polypeptide: MLSNSSQVILRNSDYFQHQDVLILNYEADTLGLSLLAHAKSVTALALDFNHYLQLAAKEQPQLACFFGHTLPSSFAGKTFDSVIVFFPKAKSLAPYLFELAANHLNIDGQLMIVGDNKGGIKSVAKLIPDCFSAPVKRDNARHCLLYTCQLERQGRDFKLENWLSQYSLSTPQGEIIICNLVGVFSEKHLDLGTELLLSHLPKLEGRVLDFGCGAGVITVALLKAMPKLELECIDINAMALASCELTLQANKLQAKVYPSDGLTQVTGAFDAIISNPPFHDGLTSTTDIATQFVAMSEKQLKSKGIWQIVANRHLPYASTIAQVFGNFDVPAENNKFKLYACRKK.

Belongs to the methyltransferase superfamily. RsmC family. Monomer.

It localises to the cytoplasm. The catalysed reaction is guanosine(1207) in 16S rRNA + S-adenosyl-L-methionine = N(2)-methylguanosine(1207) in 16S rRNA + S-adenosyl-L-homocysteine + H(+). Functionally, specifically methylates the guanine in position 1207 of 16S rRNA in the 30S particle. In Shewanella denitrificans (strain OS217 / ATCC BAA-1090 / DSM 15013), this protein is Ribosomal RNA small subunit methyltransferase C.